The following is a 557-amino-acid chain: Formate--tetrahydrofolate ligase (557 aa).

67 to 74 (TPAGEGKT) is a binding site for ATP.

It belongs to the formate--tetrahydrofolate ligase family.

The catalysed reaction is (6S)-5,6,7,8-tetrahydrofolate + formate + ATP = (6R)-10-formyltetrahydrofolate + ADP + phosphate. It functions in the pathway one-carbon metabolism; tetrahydrofolate interconversion. The sequence is that of Formate--tetrahydrofolate ligase from Cereibacter sphaeroides (strain ATCC 17029 / ATH 2.4.9) (Rhodobacter sphaeroides).